The sequence spans 23 residues: Aldehyde dehydrogenase (23 aa).

The protein belongs to the aldehyde dehydrogenase family.

The catalysed reaction is an aldehyde + NAD(+) + H2O = a carboxylate + NADH + 2 H(+). This chain is Aldehyde dehydrogenase, found in Moraxella sp. (strain TAE123).